We begin with the raw amino-acid sequence, 218 residues long: Glutathione S-transferase Y1 (218 aa).

Residues 2-88 (PMILGYWNVR…YIARKHNLCG (87 aa)) enclose the GST N-terminal domain. Glutathione contacts are provided by residues 7 to 8 (YW), 46 to 50 (WLNEK), 59 to 60 (NL), and 72 to 73 (QS). The 119-residue stretch at 90-208 (TEEERIRVDI…KTSRFLRRPI (119 aa)) folds into the GST C-terminal domain. A substrate-binding site is contributed by tyrosine 116.

It belongs to the GST superfamily. Mu family. Homodimer.

It is found in the cytoplasm. The catalysed reaction is RX + glutathione = an S-substituted glutathione + a halide anion + H(+). Its function is as follows. Conjugation of reduced glutathione to a wide number of exogenous and endogenous hydrophobic electrophiles. This is Glutathione S-transferase Y1 from Cricetulus longicaudatus (Long-tailed dwarf hamster).